Reading from the N-terminus, the 2789-residue chain is Multiple epidermal growth factor-like domains protein 8 (2789 aa).

The first 27 residues, 1–27 (MALGGALALALALALAVLGPLSLRVLA), serve as a signal peptide directing secretion. Residues 28-2591 (GDCKGQRQVL…FFRQDQAHID (2564 aa)) lie on the Extracellular side of the membrane. 6 cysteine pairs are disulfide-bonded: Cys-30–Cys-57, Cys-142–Cys-152, Cys-146–Cys-158, Cys-174–Cys-184, Cys-178–Cys-191, and Cys-193–Cys-202. Positions 30-140 (CKGQRQVLRE…LGFNASFRFS (111 aa)) constitute a CUB 1 domain. The N-linked (GlcNAc...) asparagine glycan is linked to Asn-50. EGF-like domains lie at 138–168 (RFSLCPGGCQNHGQCKSPGVCVCEPGWGGPD) and 170–203 (GLQECSAYCGSHGTCASTLGPCRCEPGFLGRACD). Kelch repeat units lie at residues 241–287 (LLAV…AVAW), 290–338 (LLVL…AGHA), 346–399 (WLYV…FHAP), 402–453 (TLLV…FHTA), 459–511 (YMVV…APPS), and 525–575 (VLLV…SRDP). PSI domains are found at residues 561-613 (YCSM…SDCQ), 847-899 (ACTS…ALCP), and 900-947 (LCEE…EECP). Asn-1048 carries an N-linked (GlcNAc...) asparagine glycan. The EGF-like 3; calcium-binding domain occupies 1074-1115 (DVDECRLGLARCHPRATCLNTPLSYECHCQRGYQGDGITHCN). 16 disulfide bridges follow: Cys-1078/Cys-1091, Cys-1085/Cys-1100, Cys-1102/Cys-1114, Cys-1163/Cys-1171, Cys-1165/Cys-1179, Cys-1182/Cys-1191, Cys-1194/Cys-1208, Cys-1211/Cys-1224, Cys-1213/Cys-1231, Cys-1233/Cys-1242, Cys-1245/Cys-1259, Cys-1263/Cys-1302, Cys-1336/Cys-1367, Cys-1407/Cys-1421, Cys-1415/Cys-1433, and Cys-1435/Cys-1444. Laminin EGF-like domains lie at 1163 to 1210 (CGCS…GCRP) and 1211 to 1261 (CQCN…SCFR). Asn-1226 carries an N-linked (GlcNAc...) asparagine glycan. Residues 1263–1405 (CGGRALLTNV…WGFNASVGSA (143 aa)) form the CUB 2 domain. The N-linked (GlcNAc...) asparagine glycan is linked to Asn-1271. Phosphothreonine is present on Thr-1353. One can recognise an EGF-like 4 domain in the interval 1403–1445 (GSARCGSGGPGSCPVPQECVPQDGAAGAGLCRCPQGWAGPHCR). 6 Kelch repeats span residues 1522-1570 (TLWM…SFHA), 1580-1629 (AMYL…TARR), 1632-1679 (SLLL…SAVY), 1685-1735 (SLYV…HASA), 1740-1787 (TMVV…ESVA), and 1796-1841 (RLYI…WCHG). 4 PSI domains span residues 1820–1860 (PCRL…PPCS), 1868–1923 (ECRR…NDCR), 2004–2062 (PCHL…ESCS), and 2064–2121 (GCAQ…LSCP). N-linked (GlcNAc...) asparagine glycosylation is present at Asn-2010. The EGF-like 5 domain maps to 2122–2160 (PEDECANGHHDCNETQNCHDQPHGYECSCKTGYTMDNVT). Cystine bridges form between Cys-2126-Cys-2139 and Cys-2133-Cys-2148. Residues Asn-2158 and Asn-2173 are each glycosylated (N-linked (GlcNAc...) asparagine). 8 cysteine pairs are disulfide-bonded: Cys-2197–Cys-2205, Cys-2199–Cys-2214, Cys-2217–Cys-2226, Cys-2229–Cys-2243, Cys-2324–Cys-2333, Cys-2326–Cys-2341, Cys-2343–Cys-2368, and Cys-2371–Cys-2385. Laminin EGF-like domains are found at residues 2197 to 2245 (CRCN…TCRP) and 2324 to 2387 (CQCN…QCYR). The tract at residues 2468–2508 (VHIQPPPPPPPPPPPADGVPRVAADLGGLGTGSGSGSPVEP) is disordered. Residues 2471 to 2484 (QPPPPPPPPPPPAD) are compositionally biased toward pro residues. The chain crosses the membrane as a helical span at residues 2592-2612 (LFVFFSVFFSCFFLFLSLCVL). Topologically, residues 2613–2789 (LWKAKQALDQ…SQDNLTSMSL (177 aa)) are cytoplasmic. A compositionally biased stretch (gly residues) spans 2762–2776 (GGAGGSGHGGGGGRK). The segment at 2762 to 2789 (GGAGGSGHGGGGGRKGLLSQDNLTSMSL) is disordered. The segment covering 2780 to 2789 (SQDNLTSMSL) has biased composition (polar residues).

Highest expression in brain, testis and kidney.

The protein resides in the membrane. Functionally, acts as a negative regulator of hedgehog signaling. The polypeptide is Multiple epidermal growth factor-like domains protein 8 (Megf8) (Mus musculus (Mouse)).